A 325-amino-acid polypeptide reads, in one-letter code: NADH-quinone oxidoreductase subunit H (325 aa).

A run of 8 helical transmembrane segments spans residues 8 to 28 (VIDILLTVVKAVVILLVVVTC), 81 to 101 (GIFTLAPVIAFTSLLITFAIV), 114 to 134 (IGVLFFLMMAGLAVYAVLFAG), 159 to 179 (FLGLSLMGVVAQAGSFNLGAI), 186 to 206 (LWNVVPQFFGFVTFALAGVAV), 237 to 257 (FFVGEYVGIVTISALMVTLFF), 265 to 285 (LPPFIWFSIKTAFFMMMFILI), and 304 to 324 (ICLPLTLLNLLATAAVILYNA).

Belongs to the complex I subunit 1 family. In terms of assembly, NDH-1 is composed of 13 different subunits. Subunits NuoA, H, J, K, L, M, N constitute the membrane sector of the complex.

It is found in the cell inner membrane. The enzyme catalyses a quinone + NADH + 5 H(+)(in) = a quinol + NAD(+) + 4 H(+)(out). Its function is as follows. NDH-1 shuttles electrons from NADH, via FMN and iron-sulfur (Fe-S) centers, to quinones in the respiratory chain. The immediate electron acceptor for the enzyme in this species is believed to be ubiquinone. Couples the redox reaction to proton translocation (for every two electrons transferred, four hydrogen ions are translocated across the cytoplasmic membrane), and thus conserves the redox energy in a proton gradient. This subunit may bind ubiquinone. The protein is NADH-quinone oxidoreductase subunit H of Sodalis glossinidius (strain morsitans).